A 233-amino-acid polypeptide reads, in one-letter code: tRNA pseudouridine synthase B (233 aa).

Aspartate 48 (nucleophile) is an active-site residue.

It belongs to the pseudouridine synthase TruB family. Type 1 subfamily.

It carries out the reaction uridine(55) in tRNA = pseudouridine(55) in tRNA. Functionally, responsible for synthesis of pseudouridine from uracil-55 in the psi GC loop of transfer RNAs. The chain is tRNA pseudouridine synthase B from Bacteroides fragilis (strain ATCC 25285 / DSM 2151 / CCUG 4856 / JCM 11019 / LMG 10263 / NCTC 9343 / Onslow / VPI 2553 / EN-2).